Reading from the N-terminus, the 349-residue chain is Guanine nucleotide-binding protein-like alpha-10 subunit (349 aa).

Positions Glu-33–Asn-349 constitute a G-alpha domain. Residues Arg-36–Thr-49 form a G1 motif region. The segment at Asp-168–Gln-176 is G2 motif. The interval Ile-191–Thr-200 is G3 motif. GTP-binding positions include Glu-195–Gln-199 and Asn-266–Asp-269. The G4 motif stretch occupies residues Ile-262 to Asp-269. Residues Asn-320 to Val-325 are G5 motif.

It belongs to the G-alpha family.

The sequence is that of Guanine nucleotide-binding protein-like alpha-10 subunit (gpaJ) from Dictyostelium discoideum (Social amoeba).